The primary structure comprises 353 residues: MKKIGFFIMNIGSAGGTERVSINVANALAKQGYDVSFISIGGNKPFFQVDEKINIYAMNKLPYSLKKDYFSITKKLRELVKELQLDTLIVVDGAIMLFSALALVNLNIKHILWEHYSFNFTGNRLVRTLGKYLAVTTCDKIVTLTEAEKTLWQEKFKTNNIISIANPNTLLPKNKLAKLENKTILSVGHLFSYKGFDYLLKVWQVLAKKYPDWNLKIVGSGEEEENLKNLAKALDIEDSVNFIPRTNDVSFYYESSSIYCLPSQTEGLPLVVIEAMAFGLPIVAFNCSPGVKQLVEHKENGFLCEQNNIEEMVKGLDLLINNPELYLQMSDKSRLMSEDYGIEKIIEEWKGIL.

Residues 267-287 (GLPLVVIEAMAFGLPIVAFNC) form a helical membrane-spanning segment.

This sequence belongs to the glycosyltransferase group 1 family. Glycosyltransferase 4 subfamily.

It localises to the membrane. This is an uncharacterized protein from Haemophilus influenzae (strain ATCC 51907 / DSM 11121 / KW20 / Rd).